Reading from the N-terminus, the 521-residue chain is Feruloyl esterase B (521 aa).

A signal peptide spans 1-17; the sequence is MKVASLLSLALPGAALA. Intrachain disulfides connect cysteine 26–cysteine 72 and cysteine 61–cysteine 111. Residues asparagine 37, asparagine 51, asparagine 77, asparagine 95, asparagine 144, and asparagine 177 are each glycosylated (N-linked (GlcNAc...) asparagine). Disulfide bonds link cysteine 184–cysteine 438, cysteine 253–cysteine 270, and cysteine 279–cysteine 288. Serine 185 functions as the Acyl-ester intermediate in the catalytic mechanism. Positions 254, 257, 259, 261, and 263 each coordinate Ca(2+). N-linked (GlcNAc...) asparagine glycans are attached at residues asparagine 284, asparagine 347, asparagine 352, and asparagine 378. Active-site charge relay system residues include aspartate 397 and histidine 437. N-linked (GlcNAc...) asparagine glycans are attached at residues asparagine 488 and asparagine 511. Cysteines 498 and 520 form a disulfide.

The protein belongs to the tannase family. As to quaternary structure, homodimer. Post-translationally, glycosylated.

It localises to the secreted. It catalyses the reaction feruloyl-polysaccharide + H2O = ferulate + polysaccharide.. Inhibited by the specific serine esterase inhibitor AEBSF. In terms of biological role, involved in degradation of plant cell walls. Hydrolyzes of the feruloyl-arabinose ester bond in arabinoxylans as well as the feruloyl-galactose and feruloyl-arabinose ester bonds in pectin. This Aspergillus niger protein is Feruloyl esterase B (faeB).